Consider the following 128-residue polypeptide: Large ribosomal subunit protein bL17 (128 aa).

The protein belongs to the bacterial ribosomal protein bL17 family. As to quaternary structure, part of the 50S ribosomal subunit. Contacts protein L32.

This is Large ribosomal subunit protein bL17 from Streptococcus equi subsp. equi (strain 4047).